Consider the following 137-residue polypeptide: Phospholipase A2 group V (137 aa).

An N-terminal signal peptide occupies residues Met-1–Gly-20. Intrachain disulfides connect Cys-46–Cys-137, Cys-48–Cys-64, Cys-63–Cys-117, Cys-70–Cys-110, Cys-79–Cys-103, and Cys-97–Cys-108. Ca(2+) is bound by residues Tyr-47, Gly-49, and Gly-51. The active site involves His-67. Asp-68 contributes to the Ca(2+) binding site. Asp-111 is an active-site residue.

This sequence belongs to the phospholipase A2 family. Requires Ca(2+) as cofactor. In terms of processing, this enzyme lacks one of the seven disulfide bonds found in similar PA2 proteins.

The protein localises to the secreted. It is found in the cell membrane. Its subcellular location is the cytoplasmic vesicle. The protein resides in the phagosome. It localises to the recycling endosome. The protein localises to the golgi apparatus. It is found in the cis-Golgi network. Its subcellular location is the trans-Golgi network. The enzyme catalyses a 1,2-diacyl-sn-glycero-3-phosphocholine + H2O = a 1-acyl-sn-glycero-3-phosphocholine + a fatty acid + H(+). It carries out the reaction 1-hexadecanoyl-2-(9Z-octadecenoyl)-sn-glycero-3-phosphocholine + H2O = 1-hexadecanoyl-sn-glycero-3-phosphocholine + (9Z)-octadecenoate + H(+). It catalyses the reaction 1-hexadecanoyl-2-(5Z,8Z,11Z,14Z-eicosatetraenoyl)-sn-glycero-3-phosphocholine + H2O = 1-hexadecanoyl-sn-glycero-3-phosphocholine + (5Z,8Z,11Z,14Z)-eicosatetraenoate + H(+). The catalysed reaction is 1-hexadecanoyl-2-(9Z,12Z-octadecadienoyl)-sn-glycero-3-phosphoethanolamine + H2O = 1-hexadecanoyl-sn-glycero-3-phosphoethanolamine + (9Z,12Z)-octadecadienoate + H(+). The enzyme catalyses 1-hexadecanoyl-2-(5Z,8Z,11Z,14Z-eicosatetraenoyl)-sn-glycero-3-phosphoethanolamine + H2O = 1-hexadecanoyl-sn-glycero-3-phosphoethanolamine + (5Z,8Z,11Z,14Z)-eicosatetraenoate + H(+). It carries out the reaction 1-octadecanoyl-2-(5Z,8Z,11Z,14Z-eicosatetraenoyl)-sn-glycero-3-phospho-(1D-myo-inositol) + H2O = 1-octadecanoyl-sn-glycero-3-phospho-(1D-myo-inositol) + (5Z,8Z,11Z,14Z)-eicosatetraenoate + H(+). It catalyses the reaction 1-hexadecanoyl-2-(9Z-octadecenoyl)-sn-glycero-3-phosphoglycerol + H2O = 1-hexadecanoyl-sn-glycero-3-phosphoglycerol + (9Z)-octadecenoate + H(+). The catalysed reaction is N-hexadecanoyl-1,2-di-(9Z-octadecenoyl)-sn-glycero-3-phosphoethanolamine + H2O = N-hexadecanoyl-1-(9Z-octadecenoyl)-sn-glycero-3-phosphoethanolamine + (9Z)-octadecenoate + H(+). The enzyme catalyses 1'-[1,2-di-(9Z-octadecenoyl)-sn-glycero-3-phospho]-3'-[1-(9Z-octadecenoyl)-sn-glycero-3-phospho]-glycerol + H2O = 1',3'-bis-[1-(9Z-octadecenoyl)-sn-glycero-3-phospho]-glycerol + (9Z)-octadecenoate + H(+). It carries out the reaction 1',3'-bis[1,2-di-(9Z-octadecenoyl)-sn-glycero-3-phospho]-glycerol + H2O = 1'-[1,2-di-(9Z-octadecenoyl)-sn-glycero-3-phospho]-3'-[1-(9Z-octadecenoyl)-sn-glycero-3-phospho]-glycerol + (9Z)-octadecenoate + H(+). It functions in the pathway lipid metabolism; phospholipid metabolism. Its pathway is lipid metabolism; leukotriene B4 biosynthesis. It participates in lipid metabolism; leukotriene C4 biosynthesis. Its function is as follows. Secretory calcium-dependent phospholipase A2 that primarily targets extracellular phospholipids. Hydrolyzes the ester bond of the fatty acyl group attached at sn-2 position of phospholipids (phospholipase A2 activity), preferentially releasing fatty acyl groups with a low degree of unsaturation such as oleoyl (C18:1) and linoleoyl (C18:2) groups. Hydrolyzes low-density lipoprotein (LDL) phospholipids releasing unsaturated fatty acids that drive macrophage polarization toward an M2 phenotype. May act in an autocrine and paracrine manner. Contributes to lipid remodeling of cellular membranes at different subcellular locations and generation of lipid mediators involved in pathogen clearance. Cleaves sn-2 fatty acyl chains of cardiolipin, a major component of the inner membrane of mitochondria and bacterial membranes. Promotes phagocytosis of bacteria in macrophages through production of lysophosphatidylethanolamines. Displays bactericidal activity against Gram-positive bacteria by directly hydrolyzing phospholipids of the bacterial membrane. Promotes phagocytosis and killing of ingested fungi likely through controlling phagosome-lysosome fusion and phagosome maturation. Plays a role in biosynthesis of cysteinyl leukotrienes (CysLTs) in myeloid cells. In eosinophils, triggers perinuclear arachidonate release and LTC4 synthesis in a PLA2G4A-independent way. In neutrophils, amplifies CysLTs biosynthesis initiated by PLA2G4A. Promotes immune complex clearance in macrophages via stimulating synthesis of CysLTs, which act through CYSLTR1 to trigger phagocytosis. May regulate antigen processing in antigen-presenting cells. In pulmonary macrophages regulates IL33 production required for activation of group 2 innate lymphoid cells. May play a role in the biosynthesis of N-acyl ethanolamines that regulate energy metabolism. Hydrolyzes N-acyl phosphatidylethanolamines to N-acyl lysophosphatidylethanolamines, which are further cleaved by a lysophospholipase D to release N-acyl ethanolamines. In Rattus norvegicus (Rat), this protein is Phospholipase A2 group V (Pla2g5).